Consider the following 238-residue polypeptide: CASP-like protein 2BC2 (238 aa).

Over 1–66 (MPSSTYPRRR…FHQKVAVEKR (66 aa)) the chain is Cytoplasmic. Residues 67 to 87 (LKIGEVILRFAMIALALVAAV) form a helical membrane-spanning segment. At 88–111 (RVGTDTQTRTIFTIEKKAKYSDMK) the chain is on the extracellular side. Residues 112–132 (ALVFLVVMNGIVASYSLLQGL) form a helical membrane-spanning segment. Over 133–148 (RCVLSIYTQSPLTSKP) the chain is Cytoplasmic. The helical transmembrane segment at 149–169 (LAWLIFALDQTMAYFSLAAAA) threads the bilayer. At 170–200 (AAAESAYLAERGQTEFQWMKVCIFYEKFCHQ) the chain is on the extracellular side. A helical membrane pass occupies residues 201 to 221 (IGEGLVSTFLVSLSMATVSGM). Topologically, residues 222–238 (SAYHLFRLYGSKGKSIQ) are cytoplasmic.

The protein belongs to the Casparian strip membrane proteins (CASP) family. Homodimer and heterodimers.

The protein resides in the cell membrane. The chain is CASP-like protein 2BC2 from Picea sitchensis (Sitka spruce).